A 225-amino-acid chain; its full sequence is Glutathione S-transferase A (225 aa).

In terms of domain architecture, GST N-terminal spans 3–85; the sequence is KDMTLLWGSG…YLESQFKSQG (83 aa). Glutathione is bound at residue Arg-18. Residues 92–217 form the GST C-terminal domain; it reads CPAEQAMMYQ…WPPTWLESPQ (126 aa).

The protein belongs to the GST superfamily. Theta family. As to quaternary structure, homodimer. In terms of tissue distribution, found in all the tissues examined. Highest values found in liver and in intestinal mucosa.

Its subcellular location is the cytoplasm. The catalysed reaction is RX + glutathione = an S-substituted glutathione + a halide anion + H(+). Functionally, conjugation of reduced glutathione to a wide number of exogenous and endogenous hydrophobic electrophiles. This is Glutathione S-transferase A from Pleuronectes platessa (European plaice).